A 127-amino-acid chain; its full sequence is Large ribosomal subunit protein bL17 (127 aa).

This sequence belongs to the bacterial ribosomal protein bL17 family. As to quaternary structure, part of the 50S ribosomal subunit. Contacts protein L32.

This Stenotrophomonas maltophilia (strain K279a) protein is Large ribosomal subunit protein bL17.